A 164-amino-acid polypeptide reads, in one-letter code: HTH-type transcriptional regulator PapX (164 aa).

Positions 25-159 (EHLLMQLCIR…FEVISKKLLA (135 aa)) constitute an HTH marR-type domain.

The protein resides in the cytoplasm. In Escherichia coli, this protein is HTH-type transcriptional regulator PapX (papX).